The following is a 184-amino-acid chain: Ribosome-recycling factor (184 aa).

The protein belongs to the RRF family.

It is found in the cytoplasm. In terms of biological role, responsible for the release of ribosomes from messenger RNA at the termination of protein biosynthesis. May increase the efficiency of translation by recycling ribosomes from one round of translation to another. This chain is Ribosome-recycling factor, found in Stenotrophomonas maltophilia (strain R551-3).